A 757-amino-acid chain; its full sequence is LPS-assembly protein LptD (757 aa).

A signal peptide spans 1-20 (MLQRFITSLMLLPFPGSALA).

Belongs to the LptD family. As to quaternary structure, component of the lipopolysaccharide transport and assembly complex. Interacts with LptE and LptA.

Its subcellular location is the cell outer membrane. Functionally, together with LptE, is involved in the assembly of lipopolysaccharide (LPS) at the surface of the outer membrane. This is LPS-assembly protein LptD from Idiomarina loihiensis (strain ATCC BAA-735 / DSM 15497 / L2-TR).